Here is a 212-residue protein sequence, read N- to C-terminus: Pyrrolidone-carboxylate peptidase (212 aa).

Active-site residues include glutamate 78, cysteine 141, and histidine 165.

This sequence belongs to the peptidase C15 family. As to quaternary structure, homotetramer.

It is found in the cytoplasm. The catalysed reaction is Release of an N-terminal pyroglutamyl group from a polypeptide, the second amino acid generally not being Pro.. Its function is as follows. Removes 5-oxoproline from various penultimate amino acid residues except L-proline. In Staphylococcus haemolyticus (strain JCSC1435), this protein is Pyrrolidone-carboxylate peptidase.